Reading from the N-terminus, the 123-residue chain is Small ribosomal subunit protein uS12 (123 aa).

Residues 1-28 (MPTIQQLIRNPREPKRTRTKTPALKACP) are disordered. At Asp89 the chain carries 3-methylthioaspartic acid. The disordered stretch occupies residues 104–123 (TQPVKNRKQRRSHYGAKKPK). The segment covering 108–123 (KNRKQRRSHYGAKKPK) has biased composition (basic residues).

The protein belongs to the universal ribosomal protein uS12 family. Part of the 30S ribosomal subunit. Contacts proteins S8 and S17. May interact with IF1 in the 30S initiation complex.

Its function is as follows. With S4 and S5 plays an important role in translational accuracy. In terms of biological role, interacts with and stabilizes bases of the 16S rRNA that are involved in tRNA selection in the A site and with the mRNA backbone. Located at the interface of the 30S and 50S subunits, it traverses the body of the 30S subunit contacting proteins on the other side and probably holding the rRNA structure together. The combined cluster of proteins S8, S12 and S17 appears to hold together the shoulder and platform of the 30S subunit. This chain is Small ribosomal subunit protein uS12, found in Hyphomonas neptunium (strain ATCC 15444).